We begin with the raw amino-acid sequence, 476 residues long: Cytoplasmic 60S subunit biogenesis factor ZNF622 (476 aa).

An N-acetylalanine modification is found at A2. 2 consecutive U1-type zinc fingers follow at residues 4 to 28 and 69 to 93; these read LTCI…TDWH and TYCT…SRRH. Positions 137-243 are disordered; sequence AIKAQPSTSP…AEDAAAEESP (107 aa). Residues 167–177 show a composition bias toward basic and acidic residues; sequence VPERDPTEKPP. Residues 195 to 239 are compositionally biased toward acidic residues; it reads EDGEEEGEEEEEDDEDEDWEDIDSDDGLECEDPGVEDQDAEDAAA. S275 is modified (phosphoserine).

Belongs to the REI1 family. As to quaternary structure, homo- and heterodimer. Associates with pre-60S ribosomal particles. Interacts with MELK and MYBL2. Interacts with DNAJC21. In terms of processing, phosphorylated by MELK. The phosphorylation may redirect the protein to the nucleus. Ubiquitinated by HECTD1, leading to its degradation.

Its subcellular location is the cytoplasm. It is found in the nucleus. Functionally, pre-60S-associated cytoplasmic factor involved in the cytoplasmic maturation of the 60S subunit. The sequence is that of Cytoplasmic 60S subunit biogenesis factor ZNF622 (Znf622) from Mus musculus (Mouse).